Reading from the N-terminus, the 492-residue chain is Glutamyl-tRNA(Gln) amidotransferase subunit A (492 aa).

Residues lysine 84 and serine 159 each act as charge relay system in the active site. The active-site Acyl-ester intermediate is the serine 183.

The protein belongs to the amidase family. GatA subfamily. Heterotrimer of A, B and C subunits.

It catalyses the reaction L-glutamyl-tRNA(Gln) + L-glutamine + ATP + H2O = L-glutaminyl-tRNA(Gln) + L-glutamate + ADP + phosphate + H(+). In terms of biological role, allows the formation of correctly charged Gln-tRNA(Gln) through the transamidation of misacylated Glu-tRNA(Gln) in organisms which lack glutaminyl-tRNA synthetase. The reaction takes place in the presence of glutamine and ATP through an activated gamma-phospho-Glu-tRNA(Gln). In Anaeromyxobacter sp. (strain K), this protein is Glutamyl-tRNA(Gln) amidotransferase subunit A.